Consider the following 899-residue polypeptide: Semaphorin-1A (899 aa).

Low complexity predominate over residues M1–N20. The disordered stretch occupies residues M1–K24. Residues M1–K40 are Cytoplasmic-facing. The chain crosses the membrane as a helical span at residues L41 to I61. At G62–L657 the chain is on the extracellular side. N-linked (GlcNAc...) asparagine glycans are attached at residues N63, N90, and N117. The 470-residue stretch at K74–L543 folds into the Sema domain. Disulfide bonds link C141–C151 and C169–C178. N-linked (GlcNAc...) asparagine glycosylation is found at N187, N207, and N311. 2 disulfides stabilise this stretch: C288/C402 and C312/C361. N404 is a glycosylation site (N-linked (GlcNAc...) asparagine). Residues V658–F678 form a helical membrane-spanning segment. Residues C679–D899 are Cytoplasmic-facing. Disordered regions lie at residues V735–N766 and V798–D899. Residues F809–R827 show a composition bias toward polar residues. Basic residues predominate over residues S828–P837. Residues S847–S876 show a composition bias toward low complexity.

It belongs to the semaphorin family. In terms of tissue distribution, expressed by subsets of neurons and muscles.

It localises to the cell membrane. Involved in growth cone guidance through its role in axonal repulsion. Function in neurons is essential for adult survival, motor neuron survival, and is important for climbing behavior and activity. The protein is Semaphorin-1A of Drosophila melanogaster (Fruit fly).